A 370-amino-acid chain; its full sequence is F-box/kelch-repeat protein At4g38940 (370 aa).

The 47-residue stretch at 18–64 (PCLISLLPEEIVVDIVARVPRCYYPTLSQVSRRFRSLVASPEIYKRR) folds into the F-box domain. 3 Kelch repeats span residues 131-177 (NIFV…LIDR), 178-230 (KIYV…VIGG), and 263-315 (SACV…SYTG).

In terms of assembly, part of a SCF (ASK-cullin-F-box) protein ligase complex. Interacts with SKP1A/ASK1, SKP1B/ASK2, ASK11, ASK13 and ASK18.

It localises to the nucleus. The protein operates within protein modification; protein ubiquitination. In terms of biological role, component of SCF(ASK-cullin-F-box) E3 ubiquitin ligase complexes, which may mediate the ubiquitination and subsequent proteasomal degradation of target proteins. This chain is F-box/kelch-repeat protein At4g38940, found in Arabidopsis thaliana (Mouse-ear cress).